The sequence spans 279 residues: Zinc-finger homeodomain protein 1 (279 aa).

Acidic residues predominate over residues 1–13 (MDFDDHDDGDEEM). A disordered region spans residues 1–47 (MDFDDHDDGDEEMPPMPVSSSYETPPQHGLAGGGMAPKPPGEIGSRV). Residues 57–106 (YRECLKNHAVGIGGHAVDGCGEFMAAGEEGTIDALRCAACNCHRNFHRKE) form a ZF-HD dimerization-type; degenerate zinc finger. Residues 168 to 190 (RPLALPSTSHSGRDDGDDLSGMV) are disordered. The homeobox DNA-binding region spans 215-278 (KKRFRTKFTQ…NNKHTLGKKL (64 aa)).

Homo- and heterodimer with other ZFHD proteins.

The protein localises to the nucleus. In terms of biological role, putative transcription factor. In Oryza sativa subsp. japonica (Rice), this protein is Zinc-finger homeodomain protein 1 (ZHD1).